We begin with the raw amino-acid sequence, 877 residues long: Alanine--tRNA ligase (877 aa).

4 residues coordinate Zn(2+): His-564, His-568, Cys-666, and His-670.

It belongs to the class-II aminoacyl-tRNA synthetase family. It depends on Zn(2+) as a cofactor.

Its subcellular location is the cytoplasm. It catalyses the reaction tRNA(Ala) + L-alanine + ATP = L-alanyl-tRNA(Ala) + AMP + diphosphate. In terms of biological role, catalyzes the attachment of alanine to tRNA(Ala) in a two-step reaction: alanine is first activated by ATP to form Ala-AMP and then transferred to the acceptor end of tRNA(Ala). Also edits incorrectly charged Ser-tRNA(Ala) and Gly-tRNA(Ala) via its editing domain. This is Alanine--tRNA ligase from Pelotomaculum thermopropionicum (strain DSM 13744 / JCM 10971 / SI).